A 179-amino-acid polypeptide reads, in one-letter code: Replication restart protein DnaT (179 aa).

The span at 151-168 (SRSSNGGMPQRDINSVSE) shows a compositional bias: polar residues. Residues 151-179 (SRSSNGGMPQRDINSVSEPDNHIPPGFRG) are disordered.

This sequence belongs to the DnaT family. Homooligomerizes. Interacts with PriB. Component of the replication restart primosome. Primosome assembly occurs via a 'hand-off' mechanism. PriA binds to replication forks, subsequently PriB then DnaT bind; DnaT then displaces ssDNA to generate the helicase loading substrate.

Involved in the restart of stalled replication forks, which reloads the replicative helicase on sites other than the origin of replication. Can function in multiple replication restart pathways. Displaces ssDNA from a PriB-ssDNA complex. Probably forms a spiral filament on ssDNA. The polypeptide is Replication restart protein DnaT (Salmonella arizonae (strain ATCC BAA-731 / CDC346-86 / RSK2980)).